Here is a 129-residue protein sequence, read N- to C-terminus: Fluoride-specific ion channel FluC (129 aa).

3 consecutive transmembrane segments (helical) span residues 20–40 (WFLG…TLAA), 67–87 (LLII…TAEI), and 96–116 (IMTA…MMLL). Residues glycine 75 and threonine 78 each coordinate Na(+).

This sequence belongs to the fluoride channel Fluc/FEX (TC 1.A.43) family.

It is found in the cell inner membrane. The catalysed reaction is fluoride(in) = fluoride(out). Its activity is regulated as follows. Na(+) is not transported, but it plays an essential structural role and its presence is essential for fluoride channel function. In terms of biological role, fluoride-specific ion channel. Important for reducing fluoride concentration in the cell, thus reducing its toxicity. This chain is Fluoride-specific ion channel FluC, found in Desulfovibrio desulfuricans (strain ATCC 27774 / DSM 6949 / MB).